We begin with the raw amino-acid sequence, 557 residues long: Dihydroxy-acid dehydratase (557 aa).

Cys-47 contacts [2Fe-2S] cluster. Asp-79 contacts Mg(2+). Cys-120 provides a ligand contact to [2Fe-2S] cluster. Mg(2+) contacts are provided by Asp-121 and Lys-122. Lys-122 carries the N6-carboxylysine modification. Cys-192 serves as a coordination point for [2Fe-2S] cluster. Glu-444 provides a ligand contact to Mg(2+). Residue Ser-470 is the Proton acceptor of the active site.

This sequence belongs to the IlvD/Edd family. In terms of assembly, homodimer. [2Fe-2S] cluster is required as a cofactor. It depends on Mg(2+) as a cofactor.

It catalyses the reaction (2R)-2,3-dihydroxy-3-methylbutanoate = 3-methyl-2-oxobutanoate + H2O. It carries out the reaction (2R,3R)-2,3-dihydroxy-3-methylpentanoate = (S)-3-methyl-2-oxopentanoate + H2O. It functions in the pathway amino-acid biosynthesis; L-isoleucine biosynthesis; L-isoleucine from 2-oxobutanoate: step 3/4. It participates in amino-acid biosynthesis; L-valine biosynthesis; L-valine from pyruvate: step 3/4. Functionally, functions in the biosynthesis of branched-chain amino acids. Catalyzes the dehydration of (2R,3R)-2,3-dihydroxy-3-methylpentanoate (2,3-dihydroxy-3-methylvalerate) into 2-oxo-3-methylpentanoate (2-oxo-3-methylvalerate) and of (2R)-2,3-dihydroxy-3-methylbutanoate (2,3-dihydroxyisovalerate) into 2-oxo-3-methylbutanoate (2-oxoisovalerate), the penultimate precursor to L-isoleucine and L-valine, respectively. This chain is Dihydroxy-acid dehydratase, found in Synechococcus sp. (strain CC9902).